We begin with the raw amino-acid sequence, 406 residues long: Cysteine desulfurase (406 aa).

Lys-226 is modified (N6-(pyridoxal phosphate)lysine). The Cysteine persulfide intermediate role is filled by Cys-364.

This sequence belongs to the class-V pyridoxal-phosphate-dependent aminotransferase family. Csd subfamily. Homodimer. Interacts with SufE and the SufBCD complex composed of SufB, SufC and SufD. The interaction with SufE is required to mediate the direct transfer of the sulfur atom from the S-sulfanylcysteine. Requires pyridoxal 5'-phosphate as cofactor.

It is found in the cytoplasm. It carries out the reaction (sulfur carrier)-H + L-cysteine = (sulfur carrier)-SH + L-alanine. It catalyses the reaction L-selenocysteine + AH2 = hydrogenselenide + L-alanine + A + H(+). It functions in the pathway cofactor biosynthesis; iron-sulfur cluster biosynthesis. Cysteine desulfurases mobilize the sulfur from L-cysteine to yield L-alanine, an essential step in sulfur metabolism for biosynthesis of a variety of sulfur-containing biomolecules. Component of the suf operon, which is activated and required under specific conditions such as oxidative stress and iron limitation. Acts as a potent selenocysteine lyase in vitro, that mobilizes selenium from L-selenocysteine. Selenocysteine lyase activity is however unsure in vivo. This is Cysteine desulfurase from Klebsiella pneumoniae (strain 342).